We begin with the raw amino-acid sequence, 200 residues long: MNIINLPELNYEVFFVFIELGLIFGSLGVVFLTNIVYSAFLLGLVFVCISFLYLLLDADFVATAQILIYVGAVNILIVFAVMLINKPQSLQFLPSWTVGDTITLILCTSLFFLLISMILSISWSNIFSIAQSNKIGEQVLKSSVQGIGSSLLIDFLLPFELLSIVLLVALIGAITIARREKKVKLQKNRTLQVTKDSFIL.

The next 5 membrane-spanning stretches (helical) occupy residues 13–33 (VFFV…VFLT), 35–55 (IVYS…LYLL), 64–84 (AQIL…VMLI), 101–121 (TITL…ILSI), and 156–176 (LLPF…AITI).

It belongs to the complex I subunit 6 family. As to quaternary structure, NDH is composed of at least 16 different subunits, 5 of which are encoded in the nucleus.

Its subcellular location is the plastid. It is found in the chloroplast thylakoid membrane. The catalysed reaction is a plastoquinone + NADH + (n+1) H(+)(in) = a plastoquinol + NAD(+) + n H(+)(out). It carries out the reaction a plastoquinone + NADPH + (n+1) H(+)(in) = a plastoquinol + NADP(+) + n H(+)(out). Functionally, NDH shuttles electrons from NAD(P)H:plastoquinone, via FMN and iron-sulfur (Fe-S) centers, to quinones in the photosynthetic chain and possibly in a chloroplast respiratory chain. The immediate electron acceptor for the enzyme in this species is believed to be plastoquinone. Couples the redox reaction to proton translocation, and thus conserves the redox energy in a proton gradient. This is NAD(P)H-quinone oxidoreductase subunit 6, chloroplastic (ndhG) from Anthoceros angustus (Hornwort).